The sequence spans 120 residues: NAD(P)H-quinone oxidoreductase subunit 3 (120 aa).

A run of 3 helical transmembrane segments spans residues 10–30 (FLGFLIIAAAVPILALVTNLI), 64–84 (MFALVFVIFDVETVFLYPWAV), and 89–109 (LGLLAFIEALIFIAILVIALA).

Belongs to the complex I subunit 3 family. In terms of assembly, NDH-1 can be composed of about 15 different subunits; different subcomplexes with different compositions have been identified which probably have different functions.

It is found in the cellular thylakoid membrane. The enzyme catalyses a plastoquinone + NADH + (n+1) H(+)(in) = a plastoquinol + NAD(+) + n H(+)(out). It carries out the reaction a plastoquinone + NADPH + (n+1) H(+)(in) = a plastoquinol + NADP(+) + n H(+)(out). Its function is as follows. NDH-1 shuttles electrons from an unknown electron donor, via FMN and iron-sulfur (Fe-S) centers, to quinones in the respiratory and/or the photosynthetic chain. The immediate electron acceptor for the enzyme in this species is believed to be plastoquinone. Couples the redox reaction to proton translocation, and thus conserves the redox energy in a proton gradient. Cyanobacterial NDH-1 also plays a role in inorganic carbon-concentration. The chain is NAD(P)H-quinone oxidoreductase subunit 3 from Prochlorococcus marinus (strain MIT 9515).